The following is a 347-amino-acid chain: O-methyltransferase aunE (347 aa).

W166 contributes to the S-adenosyl-L-methionine binding site. H265 functions as the Proton acceptor in the catalytic mechanism.

Belongs to the class I-like SAM-binding methyltransferase superfamily. Cation-independent O-methyltransferase family.

It functions in the pathway secondary metabolite biosynthesis. In terms of biological role, O-methyltransferase; part of the gene cluster that mediates the biosynthesis of aurasperone B, a dimeric gamma-naphthopyrone. The first step in the biosynthesis of aurasperone B is the production of gamma-naphthopyrone precursor YWA1 by the non-reducing polyketide synthase albA, via condensation of one acetyl-CoA starter unit with 6 malonyl-CoA units. YWA1 is then methylated by aunE at position C-6 to yield foncesin which is further methylated at position C-8 by aunD to produce fonsecin B. A key enzyme in the biosynthetic pathway is the cytochrome P450 monooxygenase aunB which catalyzes the oxidative dimerization of fonsecin B to aurasperone B. AunB also catalyzes the oxidative dimerization of rubrofusarin B into aurasperone A. The polypeptide is O-methyltransferase aunE (Aspergillus niger (strain ATCC 1015 / CBS 113.46 / FGSC A1144 / LSHB Ac4 / NCTC 3858a / NRRL 328 / USDA 3528.7)).